Consider the following 209-residue polypeptide: MARNLDPKCRQCRREGEKLFLKGEKCFTDKCAIERRAYAPGQHGQRSGQRLSGYGVQLREKQKIRRLYGVLERQFRKVYAEADRRRGQTGENLLQLLEGRLDSVAYRMGFGASRAEARQVVRHNGVLVNGKRVNIPSYTVRPGDVIELAEGTKGHLRVKAALEAAESRGFPEWIEVDAKAGKGVFKAYPQRSELSATINEGLVVELYSR.

Residues 99-179 form the S4 RNA-binding domain; the sequence is GRLDSVAYRM…FPEWIEVDAK (81 aa).

This sequence belongs to the universal ribosomal protein uS4 family. Part of the 30S ribosomal subunit. Contacts protein S5. The interaction surface between S4 and S5 is involved in control of translational fidelity.

One of the primary rRNA binding proteins, it binds directly to 16S rRNA where it nucleates assembly of the body of the 30S subunit. Functionally, with S5 and S12 plays an important role in translational accuracy. In Azoarcus sp. (strain BH72), this protein is Small ribosomal subunit protein uS4.